We begin with the raw amino-acid sequence, 79 residues long: D-alanyl carrier protein (79 aa).

Residues 1–77 (MDVKAEVIEI…KIVEGVTELR (77 aa)) form the Carrier domain. Ser-35 carries the post-translational modification O-(pantetheine 4'-phosphoryl)serine.

It belongs to the DltC family. Post-translationally, 4'-phosphopantetheine is transferred from CoA to a specific serine of apo-DCP.

It is found in the cytoplasm. The protein operates within cell wall biogenesis; lipoteichoic acid biosynthesis. Functionally, carrier protein involved in the D-alanylation of lipoteichoic acid (LTA). The loading of thioester-linked D-alanine onto DltC is catalyzed by D-alanine--D-alanyl carrier protein ligase DltA. The DltC-carried D-alanyl group is further transferred to cell membrane phosphatidylglycerol (PG) by forming an ester bond, probably catalyzed by DltD. D-alanylation of LTA plays an important role in modulating the properties of the cell wall in Gram-positive bacteria, influencing the net charge of the cell wall. In Streptococcus gordonii (strain Challis / ATCC 35105 / BCRC 15272 / CH1 / DL1 / V288), this protein is D-alanyl carrier protein.